Here is a 349-residue protein sequence, read N- to C-terminus: tRNA pseudouridine synthase D (349 aa).

Phe27 provides a ligand contact to substrate. The active-site Nucleophile is Asp80. Asn129 serves as a coordination point for substrate. A TRUD domain is found at 155-303 (GVPNYFGAQR…VEAARRAMLL (149 aa)). Phe329 is a substrate binding site.

This sequence belongs to the pseudouridine synthase TruD family.

It catalyses the reaction uridine(13) in tRNA = pseudouridine(13) in tRNA. In terms of biological role, responsible for synthesis of pseudouridine from uracil-13 in transfer RNAs. The polypeptide is tRNA pseudouridine synthase D (Escherichia fergusonii (strain ATCC 35469 / DSM 13698 / CCUG 18766 / IAM 14443 / JCM 21226 / LMG 7866 / NBRC 102419 / NCTC 12128 / CDC 0568-73)).